We begin with the raw amino-acid sequence, 124 residues long: uncharacterized protein (124 aa).

It localises to the cytoplasm. The protein localises to the nucleus. This is an uncharacterized protein from Schizosaccharomyces pombe (strain 972 / ATCC 24843) (Fission yeast).